A 359-amino-acid polypeptide reads, in one-letter code: Phosphoserine aminotransferase (359 aa).

Arg-42 provides a ligand contact to L-glutamate. Residues 76-77, Trp-102, Thr-152, Asp-171, and Gln-194 each bind pyridoxal 5'-phosphate; that span reads AS. N6-(pyridoxal phosphate)lysine is present on Lys-195. 236-237 contacts pyridoxal 5'-phosphate; it reads NT.

The protein belongs to the class-V pyridoxal-phosphate-dependent aminotransferase family. SerC subfamily. Homodimer. Requires pyridoxal 5'-phosphate as cofactor.

It localises to the cytoplasm. It catalyses the reaction O-phospho-L-serine + 2-oxoglutarate = 3-phosphooxypyruvate + L-glutamate. The catalysed reaction is 4-(phosphooxy)-L-threonine + 2-oxoglutarate = (R)-3-hydroxy-2-oxo-4-phosphooxybutanoate + L-glutamate. It functions in the pathway amino-acid biosynthesis; L-serine biosynthesis; L-serine from 3-phospho-D-glycerate: step 2/3. Its pathway is cofactor biosynthesis; pyridoxine 5'-phosphate biosynthesis; pyridoxine 5'-phosphate from D-erythrose 4-phosphate: step 3/5. Functionally, catalyzes the reversible conversion of 3-phosphohydroxypyruvate to phosphoserine and of 3-hydroxy-2-oxo-4-phosphonooxybutanoate to phosphohydroxythreonine. In Vesicomyosocius okutanii subsp. Calyptogena okutanii (strain HA), this protein is Phosphoserine aminotransferase.